The following is a 111-amino-acid chain: FK506-binding protein 1 (111 aa).

The tract at residues 1–20 (MGVEKTIITQGSGPSPQVGQ) is disordered. Residues 7-20 (IITQGSGPSPQVGQ) are compositionally biased toward polar residues. The PPIase FKBP-type domain maps to 19–111 (GQKVTMEYTG…IFDVELKKIG (93 aa)).

It belongs to the FKBP-type PPIase family. FKBP1 subfamily.

The protein localises to the cytoplasm. The catalysed reaction is [protein]-peptidylproline (omega=180) = [protein]-peptidylproline (omega=0). Inhibited by both FK506 and rapamycin. PPIases accelerate the folding of proteins. It catalyzes the cis-trans isomerization of proline imidic peptide bonds in oligopeptides. The chain is FK506-binding protein 1 (FPR1) from Gibberella zeae (strain ATCC MYA-4620 / CBS 123657 / FGSC 9075 / NRRL 31084 / PH-1) (Wheat head blight fungus).